Reading from the N-terminus, the 295-residue chain is Protoheme IX farnesyltransferase (295 aa).

9 consecutive transmembrane segments (helical) span residues 27–47, 48–68, 94–114, 117–137, 144–164, 171–191, 216–236, 241–261, and 272–292; these read LVVFTAIAGMVAAPGSIHPFL, ALISLMCIALGSGSAGAINMW, SALEFGITIGILSVFIMAIAV, ISAALLAVSILFYVFVYTIWL, NIVIGGAAGAFPPMIGWAVVT, SFILFLIIFMWTPPHFWALSL, KHILIYSILLVLTSLLPALFL, FYLSMAIIEGCVFIWFAISVI, and MFSYSISYLFSLFASIIFCSI.

Belongs to the UbiA prenyltransferase family. Protoheme IX farnesyltransferase subfamily.

The protein resides in the cell membrane. It catalyses the reaction heme b + (2E,6E)-farnesyl diphosphate + H2O = Fe(II)-heme o + diphosphate. It participates in porphyrin-containing compound metabolism; heme O biosynthesis; heme O from protoheme: step 1/1. Functionally, converts heme B (protoheme IX) to heme O by substitution of the vinyl group on carbon 2 of heme B porphyrin ring with a hydroxyethyl farnesyl side group. The protein is Protoheme IX farnesyltransferase of Wolbachia pipientis subsp. Culex pipiens (strain wPip).